The chain runs to 401 residues: S-adenosylmethionine synthase (401 aa).

Histidine 15 contacts ATP. Aspartate 17 lines the Mg(2+) pocket. Position 48 (glutamate 48) interacts with K(+). L-methionine contacts are provided by glutamate 61 and glutamine 104. A flexible loop region spans residues 104 to 114 (QSPDIALGVDR). ATP-binding positions include 179 to 181 (DGK), 246 to 247 (RF), aspartate 255, 261 to 262 (RK), alanine 278, and lysine 282. Aspartate 255 contacts L-methionine. Lysine 286 provides a ligand contact to L-methionine.

The protein belongs to the AdoMet synthase family. As to quaternary structure, homotetramer; dimer of dimers. It depends on Mg(2+) as a cofactor. The cofactor is K(+).

It is found in the cytoplasm. The catalysed reaction is L-methionine + ATP + H2O = S-adenosyl-L-methionine + phosphate + diphosphate. The protein operates within amino-acid biosynthesis; S-adenosyl-L-methionine biosynthesis; S-adenosyl-L-methionine from L-methionine: step 1/1. Its function is as follows. Catalyzes the formation of S-adenosylmethionine (AdoMet) from methionine and ATP. The overall synthetic reaction is composed of two sequential steps, AdoMet formation and the subsequent tripolyphosphate hydrolysis which occurs prior to release of AdoMet from the enzyme. The polypeptide is S-adenosylmethionine synthase (Petrotoga mobilis (strain DSM 10674 / SJ95)).